The following is a 92-amino-acid chain: Calitoxin (92 aa).

A signal peptide spans 1-20 (MKTQVLVVLVLCVVFCLAES). Positions 21–42 (RNSMTSEERGLVSLMRQRDDIA) are excised as a propeptide. Cystine bridges form between Cys-47–Cys-86, Cys-49–Cys-77, and Cys-67–Cys-87.

Belongs to the sea anemone sodium channel inhibitory toxin family. As to expression, expressed both outside and in acontia, a specialised envenomation structure laden with batteries of venom-containing nematocysts found only in the superfamily Metridioidea.

It is found in the secreted. The protein localises to the nematocyst. Functionally, in neuromuscular preparation of crustaceans, the toxin increased neurotransmitter release, causing repetitive firing of the axons. May affect sodium channels (Nav). This chain is Calitoxin, found in Calliactis polypus (Hermit crab anemone).